An 892-amino-acid polypeptide reads, in one-letter code: Alpha-actinin-1 (892 aa).

M1 carries the post-translational modification N-acetylmethionine. The segment at 1–247 is actin-binding; it reads MDHYDSQQTN…IMTYVSSFYH (247 aa). Position 6 is a phosphoserine (S6). Position 12 is a phosphotyrosine; by FAK1 (Y12). Calponin-homology (CH) domains follow at residues 31 to 135 and 144 to 250; these read KQQR…LRFA and TSAK…HAFS. K95 and K195 each carry N6-acetyllysine. Spectrin repeat units follow at residues 274–384, 394–499, 509–620, and 630–733; these read QLME…WLLN, HLAE…ALER, QLYL…ALTE, and RLRK…EVEN. Residues 274-733 are interaction with DDN; sequence QLMEDYEKLA…IARTINEVEN (460 aa). S471 carries the post-translational modification Phosphoserine. At K676 the chain carries N6-acetyllysine. A Phosphoserine modification is found at S677. EF-hand domains are found at residues 746 to 781 and 787 to 822; these read EQMNEFRASFNHFDRDHSGTLGPEEFKACLISLGYD and QGEAEFARIMSIVDPNRLGVVTFQAFIDFMSRETAD. Positions 759, 761, 763, 765, and 770 each coordinate Ca(2+). S890 carries the post-translational modification Phosphoserine.

The protein belongs to the alpha-actinin family. Homodimer; antiparallel. Interacts with MYOZ2, TTID and LPP. Interacts with DDN. Interacts with PSD. Interacts with MICALL2. Interacts with DNM2 and CTTN. Interacts with PDLIM1. Interacts with PDLIM2. Interacts with PDLIM4 (via PDZ domain). Interacts with IGSF8.

It is found in the cytoplasm. The protein localises to the cytoskeleton. Its subcellular location is the myofibril. It localises to the sarcomere. The protein resides in the z line. It is found in the cell membrane. The protein localises to the cell junction. Its subcellular location is the cell projection. It localises to the ruffle. F-actin cross-linking protein which is thought to anchor actin to a variety of intracellular structures. Association with IGSF8 regulates the immune synapse formation and is required for efficient T-cell activation. The sequence is that of Alpha-actinin-1 (ACTN1) from Homo sapiens (Human).